The following is a 720-amino-acid chain: Putative fatty acid oxidation complex trifunctional enzyme (720 aa).

Residues 1 to 384 (MQNEIKKVCV…SWKYGPFELL (384 aa)) are 3-hydroxyacyl-CoA dehydrogenase. Residues 453–720 (FVITTKMNCL…TIEKLKAIVK (268 aa)) form an enoyl-CoA hydratase/isomerase region.

It in the N-terminal section; belongs to the 3-hydroxyacyl-CoA dehydrogenase family. The protein in the C-terminal section; belongs to the enoyl-CoA hydratase/isomerase family.

It carries out the reaction a (3S)-3-hydroxyacyl-CoA + NAD(+) = a 3-oxoacyl-CoA + NADH + H(+). The enzyme catalyses a (3S)-3-hydroxyacyl-CoA = a (2E)-enoyl-CoA + H2O. The catalysed reaction is a 4-saturated-(3S)-3-hydroxyacyl-CoA = a (3E)-enoyl-CoA + H2O. It catalyses the reaction a (3Z)-enoyl-CoA = a 4-saturated (2E)-enoyl-CoA. It carries out the reaction a (3E)-enoyl-CoA = a 4-saturated (2E)-enoyl-CoA. The sequence is that of Putative fatty acid oxidation complex trifunctional enzyme from Rickettsia felis (strain ATCC VR-1525 / URRWXCal2) (Rickettsia azadi).